The following is an 87-amino-acid chain: Exendin-4 (87 aa).

Positions 1-23 (MKIILWLCVFGLFLATLFPISWQ) are cleaved as a signal peptide. The propeptide occupies 24 to 45 (MPVESGLSSEDSASSESFASKI). At S86 the chain carries Serine amide.

This sequence belongs to the glucagon family. As to expression, expressed by the venom gland.

Its subcellular location is the secreted. Venom protein that mimics the incretin hormone glucagon-like peptide 1 (GLP-1). It stimulates insulin synthesis and secretion, protects against beta-cell apoptosis in response to different insults, and promotes beta-cell proliferation It also promotes satiety, reduces food intake, reduces fat deposition, reduces body weight and inhibits gastric emptying. Interacts with GLP-1 receptor (GLP1R). Induces hypotension that is mediated by relaxation of cardiac smooth muscle. The chain is Exendin-4 from Heloderma suspectum cinctum (Banded Gila monster).